Reading from the N-terminus, the 2094-residue chain is RNA1 polyprotein (2094 aa).

The Cytoplasmic segment spans residues 524–1053; that stretch reads CNANALDFPL…YDEMITHGGK (530 aa). The 167-residue stretch at 672–838 folds into the SF3 helicase domain; sequence LTKIRATCAR…VEFDPRNPSA (167 aa). 699-706 provides a ligand contact to ATP; it reads GKSHCGKS. The chain crosses the membrane as a helical span at residues 1054–1074; the sequence is VLAIFAALLLVLLLYSSFFAL. The Lumenal segment spans residues 1075 to 1105; the sequence is YQTFVAGTSSALVSAGMITQLSANAGSVCTS. N-linked (GlcNAc...) asparagine; by host glycosylation occurs at Asn-1129. Positions 1136–1366 constitute a Peptidase C3 domain; it reads ALNSNLEDKY…CLLPDYHEDL (231 aa). Active-site for picornain 3C-like protease activity residues include His-1176, Glu-1217, and Cys-1323. Residues 1655–1780 enclose the RdRp catalytic domain; it reads SVAINCDYAS…AVHPDYLPHF (126 aa).

This sequence belongs to the nepoviruses RNA1 polyprotein family. In terms of processing, specific enzymatic cleavages by picornain 3C-like protease in vivo yield mature proteins. Picornain 3C-like protease is autocatalytically processed. NTB exists as NTB-VPg polyprotein as well as NTB mature protein. Post-translationally, VPg is uridylylated by the polymerase and is covalently linked to the 5'-end of genomic RNA. This uridylylated form acts as a nucleotide-peptide primer for the polymerase.

It localises to the host endoplasmic reticulum lumen. The protein localises to the host endoplasmic reticulum membrane. It carries out the reaction RNA(n) + a ribonucleoside 5'-triphosphate = RNA(n+1) + diphosphate. In terms of biological role, picornain 3C-like protease is a thiol protease that cleaves at Gln-|-Gly or Gln-|-Ser sites in the P1 and P2 polyproteins. Functionally, the VPg-NTB polyprotein may act as a membrane-anchor for the replication complex. This chain is RNA1 polyprotein, found in Blackcurrant reversion association virus (BRAV).